The following is a 384-amino-acid chain: Anhydro-N-acetylmuramic acid kinase (384 aa).

An ATP-binding site is contributed by 9 to 16 (GTSYDAID).

This sequence belongs to the anhydro-N-acetylmuramic acid kinase family.

The enzyme catalyses 1,6-anhydro-N-acetyl-beta-muramate + ATP + H2O = N-acetyl-D-muramate 6-phosphate + ADP + H(+). The protein operates within amino-sugar metabolism; 1,6-anhydro-N-acetylmuramate degradation. It participates in cell wall biogenesis; peptidoglycan recycling. Functionally, catalyzes the specific phosphorylation of 1,6-anhydro-N-acetylmuramic acid (anhMurNAc) with the simultaneous cleavage of the 1,6-anhydro ring, generating MurNAc-6-P. Is required for the utilization of anhMurNAc either imported from the medium or derived from its own cell wall murein, and thus plays a role in cell wall recycling. The sequence is that of Anhydro-N-acetylmuramic acid kinase from Streptomyces avermitilis (strain ATCC 31267 / DSM 46492 / JCM 5070 / NBRC 14893 / NCIMB 12804 / NRRL 8165 / MA-4680).